Consider the following 370-residue polypeptide: Pantothenate kinase 3 (370 aa).

E138 serves as the catalytic Proton acceptor. Positions 192, 195, and 207 each coordinate acetyl-CoA.

Belongs to the type II pantothenate kinase family. In terms of assembly, homodimer. Highly expressed in the liver.

The protein resides in the cytoplasm. It catalyses the reaction (R)-pantothenate + ATP = (R)-4'-phosphopantothenate + ADP + H(+). Its pathway is cofactor biosynthesis; coenzyme A biosynthesis; CoA from (R)-pantothenate: step 1/5. Its activity is regulated as follows. Subject to allosteric regulation, exists in two distinct conformational states, a catalytically incompetent (or open) conformation stabilized by the binding of acetyl(acyl)-CoA, and a catalytically competent (or closed) conformation stabilized by ATP-binding. Inhibited by acetyl-CoA and its thioesters which act as allosteric inhibitors and compete with the ATP-binding site. Inhibited by sulfonylureas and thiazolidinediones. Activated by oleoylethanolamide, palmitoyl-carnitine and oleoyl-carnitine. Its function is as follows. Catalyzes the phosphorylation of pantothenate to generate 4'-phosphopantothenate in the first and rate-determining step of coenzyme A (CoA) synthesis. This Homo sapiens (Human) protein is Pantothenate kinase 3 (PANK3).